A 727-amino-acid chain; its full sequence is MGRRAKMVEKVKTLMETHEQIRNMGICAHIDHGKTTLSDNLLAGAGMISKELAGDQLALDFDEEEAARGITIYAANVSMVHEYSGKEYLINLIDTPGHVDFGGDVTRAMRAIDGAVVVCCAVEGVMPQTETVLRQALKEKVKPVLFINKVDRLINELKLTPEELQGRFMKIIAEVNKLIEKMAPEEFKKEWLCDVANGKVAFGSAYNNWAISVPYMQRSGISFKDIIDYCEQENQKELAEKAPLHEVVLDMSIKHLPNPLTAQKYRIPNIWKGDAESTIGKSMVACDPNGPLAGVVTKIIVDKHAGAISACRLFSGRIKQGDDLYLVGSKQKARAQQVSIFMGAERVQVPSISAGNICALTGLREATAGETVCSPSEILEPGFESLSHTSEPVITVAIEAKNTKDLPKLIEILRQIAREDNTVRVEINEETGEHLISGMGELHIEVITNTKIGRDGGIEVDVGEPIVVYRETIMGTSPEIEGKSPNKHNKLYMIAEPMEESVYAAYVEGKLHDEDYKKKTTADGEARLVEAGLEKDQAKKVMSIYNGNMIVNMTRGIVQLDEARELIIEGFKEGVRNGPLAAEKVQGVKIRLVDATFHEDAIHRGPAQIIPAVRFGVRDAVAQAKPVLLEPMQSVYINTPQDYMGDGMKEINNRRGQILDMEQEGDMSIIKSSVPVAEMFGFAGAIRGATQGRCLWSVEFSGFERVPNELQPKIAKQIRDRKGLKSE.

The tr-type G domain maps to 19–260 (EQIRNMGICA…MSIKHLPNPL (242 aa)). GTP contacts are provided by residues 28-35 (AHIDHGKT), 94-98 (DTPGH), and 148-151 (NKVD). Position 603 is a diphthamide (His603).

The protein belongs to the TRAFAC class translation factor GTPase superfamily. Classic translation factor GTPase family. EF-G/EF-2 subfamily.

The protein resides in the cytoplasm. Its function is as follows. Catalyzes the GTP-dependent ribosomal translocation step during translation elongation. During this step, the ribosome changes from the pre-translocational (PRE) to the post-translocational (POST) state as the newly formed A-site-bound peptidyl-tRNA and P-site-bound deacylated tRNA move to the P and E sites, respectively. Catalyzes the coordinated movement of the two tRNA molecules, the mRNA and conformational changes in the ribosome. In Methanococcus maripaludis (strain DSM 14266 / JCM 13030 / NBRC 101832 / S2 / LL), this protein is Elongation factor 2.